The primary structure comprises 436 residues: GTPase Obg (436 aa).

One can recognise an Obg domain in the interval 2 to 160 (SMFLDTAKVS…RELALELKIL (159 aa)). An OBG-type G domain is found at 161–338 (ADVGLVGFPS…LLDATAQLLA (178 aa)). GTP is bound by residues 167 to 174 (GFPSVGKS), 192 to 196 (FTTIV), 214 to 217 (DLPG), 284 to 287 (NKMD), and 319 to 321 (SGI). Mg(2+)-binding residues include S174 and T194. The region spanning 358–436 (GFEEEEKAFD…IGKFEFEFVD (79 aa)) is the OCT domain.

This sequence belongs to the TRAFAC class OBG-HflX-like GTPase superfamily. OBG GTPase family. Monomer. The cofactor is Mg(2+).

The protein localises to the cytoplasm. Its function is as follows. An essential GTPase which binds GTP, GDP and possibly (p)ppGpp with moderate affinity, with high nucleotide exchange rates and a fairly low GTP hydrolysis rate. Plays a role in control of the cell cycle, stress response, ribosome biogenesis and in those bacteria that undergo differentiation, in morphogenesis control. This Streptococcus mutans serotype c (strain ATCC 700610 / UA159) protein is GTPase Obg.